An 861-amino-acid chain; its full sequence is Actin-binding LIM protein 1 (861 aa).

LIM zinc-binding domains are found at residues 97–156 (IHCH…MYGT), 156–216 (TRCH…MSSS), 224–283 (SNCA…LFGV), and 283–343 (VKCE…TKTE). The residue at position 216 (S216) is a Phosphoserine. A disordered region spans residues 374–414 (LQLLSPPCLTNSNKNPRQPTRTSSESIYSRPGSSIPGSPGH). Positions 381 to 400 (CLTNSNKNPRQPTRTSSESI) are enriched in polar residues. The segment covering 404–413 (PGSSIPGSPG) has biased composition (low complexity). S411 carries the post-translational modification Phosphoserine. Residues Y417 and Y440 each carry the phosphotyrosine modification. Disordered stretches follow at residues 459–590 (EDKQ…PTYA) and 634–682 (FPAA…ELLR). A phosphoserine mark is found at S466, S470, and S475. Polar residues predominate over residues 467-478 (LGESPRTLSPTP). At T477 the chain carries Phosphothreonine. Position 479 is a phosphoserine (S479). Residue Y483 is modified to Phosphotyrosine. Positions 493–518 (RSTSQGSINSPVYSRHSYTPTTSRSP) are enriched in polar residues. S496, S499, and S502 each carry phosphoserine. Positions 536–546 (PLRTSSFSSTH) are enriched in low complexity. Residues S582 and S671 each carry the phosphoserine modification. Residues 673 to 723 (REEDEEELLRRRQLQEEQLMKLNSGLGQLILKEEMEKESRERASLASRYDS) adopt a coiled-coil conformation. K704 is covalently cross-linked (Glycyl lysine isopeptide (Lys-Gly) (interchain with G-Cter in SUMO2)). Positions 713–748 (ERASLASRYDSPLHSASHAPSSKTSSLPGYGKNGLH) are disordered. Residues S723, S738, S760, and S789 each carry the phosphoserine modification. Positions 724 to 738 (PLHSASHAPSSKTSS) are enriched in low complexity. Positions 793–861 (MLEPKIFPYE…NDMKKKAKLF (69 aa)) constitute an HP domain.

Binds F-actin. Interacts with ABRA. In terms of tissue distribution, isoform 1 is detected in adult retina, where it is highly expressed in the ganglion layer. Detected in rod inner segment. Isoform 2 is highly expressed in adult retina, brain, kidney and heart. Isoform 3 is highly expressed in adult retina, brain, kidney, liver, skeletal muscle, spleen and heart. Detected in embryonic retina, brain, spinal cord, peripheral sensory ganglia and thymus.

The protein resides in the cytoplasm. It is found in the cytoskeleton. In terms of biological role, may act as scaffold protein. May play a role in the development of the retina. Has been suggested to play a role in axon guidance. In Mus musculus (Mouse), this protein is Actin-binding LIM protein 1 (Ablim1).